Consider the following 168-residue polypeptide: Endoribonuclease YbeY (168 aa).

3 residues coordinate Zn(2+): His126, His130, and His136.

This sequence belongs to the endoribonuclease YbeY family. Zn(2+) is required as a cofactor.

Its subcellular location is the cytoplasm. In terms of biological role, single strand-specific metallo-endoribonuclease involved in late-stage 70S ribosome quality control and in maturation of the 3' terminus of the 16S rRNA. This is Endoribonuclease YbeY from Sinorhizobium medicae (strain WSM419) (Ensifer medicae).